The sequence spans 378 residues: MGTRLEATEQSNHRTQRNDIQLENAKAAGKMGISVDLEAKYAKLGLNLGAITFGEKDRKKMKNSHLRKQENANISLAVCALLNSGGGAIKVKIENENYSLTRDGLGLDLEASLCKCLPFVQWHLDFTESEGYIYIYVKSWSQEIFGLPIGTLRTNLYVRSMSSSVQVSAAAALEFLQDLEETGGRPCVRPELPASIAFPEVEGEWHLEDLAAALFNRTEFQYEETFPFTRSRYVEVTLLSAKRLRKRIKELLPQTVSAFANTDGGFLFIGLDGKTQQIIGFEAEKSDLVLLESEIEKHIRQLPVTHFCEEKEKIKYTCKFIEVHKSGAVCAYVCALRVERFCCAVFAAEPESWHVEGGCVKRFTTEEWVKLQMNAPSG.

This sequence belongs to the Schlafen family. In terms of tissue distribution, mainly expressed in the thymus, lymph node and spleen.

It localises to the cytoplasm. TRNA-binding protein involved in T-cell mediated immunity. Plays a key role during the metabolic reprograming phase of activated T-cell, when T-cells produce reactive oxygen species (ROS): acts by binding tRNAs and protecting them from cleavage by the oxidative stress-activated ribonuclease angiogenin (ANG). Also required for T-cell quiescence maintenance. This Mus musculus (Mouse) protein is Schlafen family member 2.